The sequence spans 360 residues: Ribosomal RNA large subunit methyltransferase M (360 aa).

S-adenosyl-L-methionine is bound by residues serine 187, 220–223 (CPGG), aspartate 239, aspartate 259, and aspartate 276. The active-site Proton acceptor is lysine 305.

It belongs to the class I-like SAM-binding methyltransferase superfamily. RNA methyltransferase RlmE family. RlmM subfamily. In terms of assembly, monomer.

The protein resides in the cytoplasm. It catalyses the reaction cytidine(2498) in 23S rRNA + S-adenosyl-L-methionine = 2'-O-methylcytidine(2498) in 23S rRNA + S-adenosyl-L-homocysteine + H(+). Functionally, catalyzes the 2'-O-methylation at nucleotide C2498 in 23S rRNA. In Photobacterium profundum (strain SS9), this protein is Ribosomal RNA large subunit methyltransferase M.